The sequence spans 581 residues: Prolactin receptor (581 aa).

A signal peptide spans 1–24; sequence MKENVASRAVFILLLFLNASLLNG. Over 25-234 the chain is Extracellular; the sequence is QSPPGKPKII…QIPNDFPVND (210 aa). Fibronectin type-III domains follow at residues 27 to 127 and 129 to 229; these read PPGK…IVEP and PPAN…IPND. Residues cysteine 36 and cysteine 46 are joined by a disulfide bond. Residue asparagine 59 is glycosylated (N-linked (GlcNAc...) asparagine). Residues cysteine 75 and cysteine 86 are joined by a disulfide bond. A glycan (N-linked (GlcNAc...) asparagine) is linked at asparagine 132. Zn(2+) contacts are provided by aspartate 211 and histidine 212. The short motif at 215–219 is the WSXWS motif element; that stretch reads WSEWS. An N-linked (GlcNAc...) asparagine glycan is attached at asparagine 233. The helical transmembrane segment at 235–258 threads the bilayer; the sequence is TTVWIFVAVLSAVICLIMVWAVAL. Residues 259 to 581 lie on the Cytoplasmic side of the membrane; sequence KGYSMMTCIL…PAKEAPPALP (323 aa). Positions 267 to 275 match the Box 1 motif motif; it reads ILPPVPGPK. Disordered stretches follow at residues 321–362 and 462–502; these read EDQQ…LFSE and LKPS…QDKT. Residues 329–349 show a composition bias toward basic and acidic residues; sequence PSKEHMEQGVKPMHMDPDSDS.

The protein belongs to the type I cytokine receptor family. Type 1 subfamily. Interacts with SMARCA1. Interacts with NEK3 and VAV2 and this interaction is prolactin-dependent.

The protein resides in the membrane. Functionally, this is a receptor for the anterior pituitary hormone prolactin. In Cervus elaphus (Red deer), this protein is Prolactin receptor (PRLR).